A 446-amino-acid polypeptide reads, in one-letter code: Divalent metal cation transporter MntH (446 aa).

The next 11 membrane-spanning stretches (helical) occupy residues 32-52, 59-79, 107-127, 139-159, 168-188, 205-225, 264-284, 303-323, 355-375, 381-401, and 420-440; these read LAFLGPGLLVAVGYMDPGNWI, AQFGYTLLFVILISSLSAMLL, AIIFWVIAELAIIATDIAEVI, IPLIIGALITVFDVFLLLFIM, AIVGTLIFTVLMIFVFEVYIS, IIANHSILYIALGIIGATIMP, SIAFIVNCLLLVLGAALFYGV, PVLGVVMGSIMSTLFAIALLA, LVTRSLAVIPVLLCLVIFRGN, QLLVFSQVFLSIALPFSLIPL, and VNICAWGLIIILSFLNIYLII.

Belongs to the NRAMP family.

The protein localises to the cell membrane. Its function is as follows. H(+)-stimulated, divalent metal cation uptake system. The polypeptide is Divalent metal cation transporter MntH (Staphylococcus haemolyticus (strain JCSC1435)).